The sequence spans 155 residues: Nuclear cap-binding protein subunit 2 (155 aa).

Residues tyrosine 19, tyrosine 42, 111-115, 122-126, and 132-133 contribute to the mRNA site; these read RTDWD, RQYGR, and QV. The region spanning 39–117 is the RRM domain; it reads ATLYVGNLSF…RIIRTDWDAG (79 aa). Residues 121–155 form a disordered region; that stretch reads GRQYGRGKSGGQVRDEYRQDYDPARGGYGKMVQKS. The segment covering 133–143 has biased composition (basic and acidic residues); the sequence is VRDEYRQDYDP.

The protein belongs to the RRM NCBP2 family. In terms of assembly, component of the nuclear cap-binding complex (CBC), a heterodimer composed of ncbp1/cbp80 and ncbp2/cbp20 that interacts with m7GpppG-capped RNA.

The protein resides in the nucleus. The protein localises to the cytoplasm. Component of the cap-binding complex (CBC), which binds co-transcriptionally to the 5' cap of pre-mRNAs and is involved in various processes such as pre-mRNA splicing, translation regulation, nonsense-mediated mRNA decay, RNA-mediated gene silencing (RNAi) by microRNAs (miRNAs) and mRNA export. The CBC complex is involved in mRNA export from the nucleus, leading to the recruitment of the mRNA export machinery to the 5' end of mRNA and to mRNA export in a 5' to 3' direction through the nuclear pore. The CBC complex is also involved in mediating U snRNA and intronless mRNAs export from the nucleus. The CBC complex is essential for a pioneer round of mRNA translation, before steady state translation when the CBC complex is replaced by cytoplasmic cap-binding protein eIF4E. The pioneer round of mRNA translation mediated by the CBC complex plays a central role in nonsense-mediated mRNA decay (NMD), NMD only taking place in mRNAs bound to the CBC complex, but not on eIF4E-bound mRNAs. The CBC complex enhances NMD in mRNAs containing at least one exon-junction complex (EJC), promoting the interaction between upf1 and upf2. The CBC complex is also involved in 'failsafe' NMD, which is independent of the EJC complex, while it does not participate in Staufen-mediated mRNA decay (SMD). During cell proliferation, the CBC complex is also involved in microRNAs (miRNAs) biogenesis via its interaction with srrt/ars2, thereby being required for miRNA-mediated RNA interference. The CBC complex also acts as a negative regulator of parn, thereby acting as an inhibitor of mRNA deadenylation. In the CBC complex, ncbp2/cbp20 recognizes and binds capped RNAs (m7GpppG-capped RNA) but requires ncbp1/cbp80 to stabilize the movement of its N-terminal loop and lock the CBC into a high affinity cap-binding state with the cap structure. The conventional cap-binding complex with NCBP2 binds both small nuclear RNA (snRNA) and messenger (mRNA) and is involved in their export from the nucleus. The chain is Nuclear cap-binding protein subunit 2 (ncbp2) from Danio rerio (Zebrafish).